A 406-amino-acid chain; its full sequence is Outer membrane protein assembly factor BamB (406 aa).

An N-terminal signal peptide occupies residues 1–23 (MMKQVDMYKRVALIALMGMSLAG). A lipid anchor (N-palmitoyl cysteine) is attached at cysteine 24. Cysteine 24 carries S-diacylglycerol cysteine lipidation.

This sequence belongs to the BamB family. Part of the Bam complex.

The protein resides in the cell outer membrane. Part of the outer membrane protein assembly complex, which is involved in assembly and insertion of beta-barrel proteins into the outer membrane. The polypeptide is Outer membrane protein assembly factor BamB (Xanthomonas campestris pv. campestris (strain ATCC 33913 / DSM 3586 / NCPPB 528 / LMG 568 / P 25)).